An 819-amino-acid chain; its full sequence is Leucine--tRNA ligase (819 aa).

A 'HIGH' region motif is present at residues 42-53 (PYPSGAKLHIGH). The 'KMSKS' region signature appears at 578-582 (RMSKS). K581 contributes to the ATP binding site.

It belongs to the class-I aminoacyl-tRNA synthetase family.

Its subcellular location is the cytoplasm. It catalyses the reaction tRNA(Leu) + L-leucine + ATP = L-leucyl-tRNA(Leu) + AMP + diphosphate. In Caldanaerobacter subterraneus subsp. tengcongensis (strain DSM 15242 / JCM 11007 / NBRC 100824 / MB4) (Thermoanaerobacter tengcongensis), this protein is Leucine--tRNA ligase.